Reading from the N-terminus, the 446-residue chain is Phosphoglucosamine mutase (446 aa).

Serine 100 functions as the Phosphoserine intermediate in the catalytic mechanism. Mg(2+) contacts are provided by serine 100, aspartate 241, aspartate 243, and aspartate 245. At serine 100 the chain carries Phosphoserine.

It belongs to the phosphohexose mutase family. Mg(2+) is required as a cofactor. Post-translationally, activated by phosphorylation.

The enzyme catalyses alpha-D-glucosamine 1-phosphate = D-glucosamine 6-phosphate. Its function is as follows. Catalyzes the conversion of glucosamine-6-phosphate to glucosamine-1-phosphate. This chain is Phosphoglucosamine mutase, found in Methylobacterium sp. (strain 4-46).